A 393-amino-acid polypeptide reads, in one-letter code: uncharacterized protein (393 aa).

67–74 (GPDGMGKS) contacts ATP.

This is an uncharacterized protein from Mycobacterium tuberculosis (strain CDC 1551 / Oshkosh).